Reading from the N-terminus, the 377-residue chain is Putative F-box only protein 10 (377 aa).

The region spanning 1-46 is the F-box domain; the sequence is MVSVNLPWELVEEILYRVPPQSLARFRTVCKQWNSLFDDNKFVNDH.

This is Putative F-box only protein 10 (FBX10) from Arabidopsis thaliana (Mouse-ear cress).